A 178-amino-acid chain; its full sequence is Large ribosomal subunit protein uL6 (178 aa).

It belongs to the universal ribosomal protein uL6 family. Part of the 50S ribosomal subunit.

In terms of biological role, this protein binds to the 23S rRNA, and is important in its secondary structure. It is located near the subunit interface in the base of the L7/L12 stalk, and near the tRNA binding site of the peptidyltransferase center. The sequence is that of Large ribosomal subunit protein uL6 from Ligilactobacillus salivarius (strain UCC118) (Lactobacillus salivarius).